Here is a 314-residue protein sequence, read N- to C-terminus: Olfactory receptor 5P6 (314 aa).

Topologically, residues 1 to 28 (MAFQEDGNHTAVTEFVLFGLTDDPVLRV) are extracellular. Asn-8 carries N-linked (GlcNAc...) asparagine glycosylation. The chain crosses the membrane as a helical span at residues 29–49 (ILFIIFLCIYLVTVSGNLSTI). Residues 50 to 57 (LLIRVSSQ) lie on the Cytoplasmic side of the membrane. Residues 58-78 (LHHPMYFFLSHLAFADIGYSS) form a helical membrane-spanning segment. Over 79 to 102 (SVTPNMLVNFLVERHTISYIGCAI) the chain is Extracellular. An intrachain disulfide couples Cys-100 to Cys-192. Residues 103 to 123 (QLGSVVFFGSSECFILAAMAY) form a helical membrane-spanning segment. The Cytoplasmic segment spans residues 124–136 (DRFMAICNPLLYS). A helical membrane pass occupies residues 137–157 (TKMSTQVCVQLLLIAYIGGFL). Residues 158–199 (NTWSFTICFYSLVFCGPNGVNHFFCDFAPLIELSCSDVSVPA) are Extracellular-facing. A helical membrane pass occupies residues 200–220 (TVPSFTAGSIIVVTVIVIAIS). The Cytoplasmic portion of the chain corresponds to 221–240 (YIYILITILKMHSTEGRQKA). The chain crosses the membrane as a helical span at residues 241–261 (FSTCTSHLTAVTLFYGTITFI). Residues 262–274 (YVMPKSSFSTDQN) are Extracellular-facing. A helical membrane pass occupies residues 275–295 (KVVSVFYMVVIPMLNPLIYSL). Topologically, residues 296 to 314 (RNNEIKGALKRQIGRKIFS) are cytoplasmic.

The protein belongs to the G-protein coupled receptor 1 family.

The protein localises to the cell membrane. Functionally, potential odorant receptor. In Mus musculus (Mouse), this protein is Olfactory receptor 5P6.